We begin with the raw amino-acid sequence, 95 residues long: Large ribosomal subunit protein uL23 (95 aa).

It belongs to the universal ribosomal protein uL23 family. Part of the 50S ribosomal subunit. Contacts protein L29, and trigger factor when it is bound to the ribosome.

Functionally, one of the early assembly proteins it binds 23S rRNA. One of the proteins that surrounds the polypeptide exit tunnel on the outside of the ribosome. Forms the main docking site for trigger factor binding to the ribosome. The protein is Large ribosomal subunit protein uL23 of Bacillus subtilis (strain 168).